The primary structure comprises 258 residues: MAKRIDISGLSAFYGNHKAIEDISMTVEPRSVTAFIGPSGCGKSTFLRTLNRMHEVTPGGRVEGKVLLDDENLYDSNVDPVTVRRTVGMVFQRPNPFPTMSIFDNVAAGLRLNGSYRKSELNDVVEKSLRGANLWNEVKDRLNKPGSGLSGGQQQRLCIARAIAVEPQVLLMDEPCSALDPISTLAIEDLIGELKERFTIVIVTHNMQQAARVSDRTAFFNLAAVGKPGRLIEIDETERIFSNPSVQATEDYISGRFG.

An ABC transporter domain is found at 5–247; it reads IDISGLSAFY…ERIFSNPSVQ (243 aa). ATP is bound at residue 37–44; sequence GPSGCGKS.

Belongs to the ABC transporter superfamily. Phosphate importer (TC 3.A.1.7) family. The complex is composed of two ATP-binding proteins (PstB), two transmembrane proteins (PstC and PstA) and a solute-binding protein (PstS).

The protein localises to the cell membrane. It carries out the reaction phosphate(out) + ATP + H2O = ADP + 2 phosphate(in) + H(+). Its function is as follows. Part of the ABC transporter complex PstSACB involved in phosphate import. Responsible for energy coupling to the transport system. This chain is Phosphate import ATP-binding protein PstB, found in Streptomyces griseus.